We begin with the raw amino-acid sequence, 89 residues long: Large ribosomal subunit protein eL31 (89 aa).

This sequence belongs to the eukaryotic ribosomal protein eL31 family.

The polypeptide is Large ribosomal subunit protein eL31 (rpl31e) (Thermoplasma acidophilum (strain ATCC 25905 / DSM 1728 / JCM 9062 / NBRC 15155 / AMRC-C165)).